The chain runs to 249 residues: Ribonuclease 3 (249 aa).

Residues 21–149 (VDHQPLIDAL…LLGAIYLAHG (129 aa)) form the RNase III domain. Glu62 serves as a coordination point for Mg(2+). Asp66 is a catalytic residue. 2 residues coordinate Mg(2+): Asp135 and Glu138. The active site involves Glu138. Positions 176-244 (DWKTTLQERL…AHKAVGFLQD (69 aa)) constitute a DRBM domain.

Belongs to the ribonuclease III family. Homodimer. Mg(2+) is required as a cofactor.

It localises to the cytoplasm. It carries out the reaction Endonucleolytic cleavage to 5'-phosphomonoester.. Functionally, digests double-stranded RNA. Involved in the processing of primary rRNA transcript to yield the immediate precursors to the large and small rRNAs (23S and 16S). Processes some mRNAs, and tRNAs when they are encoded in the rRNA operon. Processes pre-crRNA and tracrRNA of type II CRISPR loci if present in the organism. In Corynebacterium diphtheriae (strain ATCC 700971 / NCTC 13129 / Biotype gravis), this protein is Ribonuclease 3.